The sequence spans 68 residues: MLCLPVFIILLLLASPAASNPLEKRIQNDLIRAALEDADMENDPRSIIDSVKTFCCSTFNLGICCSKK.

The first 19 residues, 1–19 (MLCLPVFIILLLLASPAAS), serve as a signal peptide directing secretion. Residues 20–53 (NPLEKRIQNDLIRAALEDADMENDPRSIIDSVKT) constitute a propeptide that is removed on maturation.

It belongs to the conotoxin T superfamily. In terms of processing, contains 2 disulfide bonds that can be either 'C1-C3, C2-C4' or 'C1-C4, C2-C3', since these disulfide connectivities have been observed for conotoxins with cysteine framework V (for examples, see AC P0DQQ7 and AC P81755). Expressed by the venom duct.

Its subcellular location is the secreted. The polypeptide is Conotoxin Ar5.3 (Conus arenatus (Sand-dusted cone)).